The primary structure comprises 337 residues: Cathepsin L-like (337 aa).

The N-terminal stretch at 1–18 is a signal peptide; sequence MNRFILLALVAAVVAVNS. A propeptide spans 19 to 119 (activation peptide); the sequence is AKLSRQIESA…SSFLAPFNVQ (101 aa). Residue Asn108 is glycosylated (N-linked (GlcNAc...) asparagine). Intrachain disulfides connect Cys141–Cys184, Cys175–Cys217, and Cys276–Cys326. Cys144 is an active-site residue. Catalysis depends on residues His283 and Asn304.

It belongs to the peptidase C1 family. Expressed in intestine, pharynx posterior bulb, hypodermis and cuticle (at protein level). Expressed in germ cells, developing oocytes, sheath cells surrounding germ cells and oocytes, and in the eggshell (at protein level).

It localises to the secreted. It is found in the cytoplasmic granule. The protein localises to the lysosome. Its subcellular location is the endosome. The protein resides in the cytoplasmic vesicle. It localises to the phagosome. It carries out the reaction Specificity close to that of papain. As compared to cathepsin B, cathepsin L exhibits higher activity toward protein substrates, but has little activity on Z-Arg-Arg-NHMec, and no peptidyl-dipeptidase activity.. In terms of biological role, cysteine protease which plays an essential role in the degradation of proteins in lysosomes. During early embryogenesis, maternally required for the proteolytic processing of yolk proteins in platelets, a lysosome-like structure where a slow and controlled degradation of yolk proteins occurs. In the gonad, required for the clearance of apoptotic germ cells in the engulfing cell phagolysosomes. In embryos, required for the degradation of endocytic and autophagic cargos. In embryos, may play a role in the degradation of lipid-containing droplets. Required for larval development. In Caenorhabditis elegans, this protein is Cathepsin L-like.